Reading from the N-terminus, the 485-residue chain is MKAYELSIEEAAAKLRAGDISSVELTQSCLQRIGDVEDRVKGFITVDEEGALAQAKAADKALQNGETNPLCGIPMSIKDLLAVKDLPMTCGSKMLEKFIAPYNATIVDKLQGAGAVNLGKVTMDEFAMGSTSETCAFGVPQNPWKEGYVAGGSSGGSAVTVAAQECFFSIGTDTGGSIRQPAALCGVVGMKPTYGRVSRYGLTAFASSLDQAGPLCRTVADTALVMNSICGYDPMDSTSINQEVPDYTASLVEGVKGLRIGIPKEYFAKGLDSEVEKVVRNAIAVLASAGAEIVDVSLPHTEYCVAVYYLIAPAEASTNLSRYDGALYGYRDLESKTLEDMYKDTRSAGFGDEVKKRILIGTYALSSGYYDAYYKKASQVRTLIIEDFKNAYRSCDVLLSPVTPTPAWKLGAKSDDPLAIYLSDIMTVSANLAGIPGMSVPGGFTEDGLPVGIQLQGSHFQEEILLKVAYNLEKLLAIQPGKLDF.

Residues Lys78 and Ser153 each act as charge relay system in the active site. The active-site Acyl-ester intermediate is Ser177.

Belongs to the amidase family. GatA subfamily. As to quaternary structure, heterotrimer of A, B and C subunits.

The enzyme catalyses L-glutamyl-tRNA(Gln) + L-glutamine + ATP + H2O = L-glutaminyl-tRNA(Gln) + L-glutamate + ADP + phosphate + H(+). In terms of biological role, allows the formation of correctly charged Gln-tRNA(Gln) through the transamidation of misacylated Glu-tRNA(Gln) in organisms which lack glutaminyl-tRNA synthetase. The reaction takes place in the presence of glutamine and ATP through an activated gamma-phospho-Glu-tRNA(Gln). In Desulfotalea psychrophila (strain LSv54 / DSM 12343), this protein is Glutamyl-tRNA(Gln) amidotransferase subunit A.